The following is a 212-amino-acid chain: MSGGLTAERMLAAYAQGVFPMAESASAAQLYWFEPALRGILPVGGVHVSRSMRRFLRHCDWRATIDNDFAGVVAGCADREETWINAPLLALYQDLFRMGHAHSLEIRAGEDLIGGMFGLTLGGAFFAESMFSRRSNASKAALIWMSSHLARCGFTLWDTQYPNPHLASMGGRAIPRLEYRRRLAAALRIPADFTAHALPDVQALLQEITQTS.

Belongs to the L/F-transferase family.

The protein resides in the cytoplasm. The catalysed reaction is N-terminal L-lysyl-[protein] + L-leucyl-tRNA(Leu) = N-terminal L-leucyl-L-lysyl-[protein] + tRNA(Leu) + H(+). The enzyme catalyses N-terminal L-arginyl-[protein] + L-leucyl-tRNA(Leu) = N-terminal L-leucyl-L-arginyl-[protein] + tRNA(Leu) + H(+). It catalyses the reaction L-phenylalanyl-tRNA(Phe) + an N-terminal L-alpha-aminoacyl-[protein] = an N-terminal L-phenylalanyl-L-alpha-aminoacyl-[protein] + tRNA(Phe). Its function is as follows. Functions in the N-end rule pathway of protein degradation where it conjugates Leu, Phe and, less efficiently, Met from aminoacyl-tRNAs to the N-termini of proteins containing an N-terminal arginine or lysine. The protein is Leucyl/phenylalanyl-tRNA--protein transferase of Paracoccus denitrificans (strain Pd 1222).